We begin with the raw amino-acid sequence, 372 residues long: uncharacterized protein (372 aa).

Basic residues-rich tracts occupy residues 1–11 and 38–48; these read MNKILGLRRAK and RLRRGMQRLSR. Positions 1–127 are disordered; the sequence is MNKILGLRRA…NSGTRDTPCW (127 aa). The segment covering 50–61 has biased composition (basic and acidic residues); that stretch reads GYGDNRRSRGSE. Over residues 93–104 the composition is skewed to polar residues; the sequence is GKTSPCGSSGTP.

This is an uncharacterized protein from Psittacid herpesvirus 1 (isolate Amazon parrot/-/97-0001/1997) (PsHV-1).